The following is a 324-amino-acid chain: Aldo-keto reductase family 1 member C15 (324 aa).

NADP(+) contacts are provided by residues 24–26 (TFA) and Asp51. Residue Tyr56 is the Proton donor of the active site. A substrate-binding site is contributed by His118. NADP(+)-binding positions include 167 to 168 (SN), Gln191, 217 to 225 (YSALGSHRD), and 269 to 281 (LAKS…IKEN).

The protein belongs to the aldo/keto reductase family. In terms of assembly, monomer. Expressed in lung, specifically in bronchiolar club cells, type II alveolar cells and epithelial cells of the duct of the bronchial gland (at protein level). Expressed in gastric parietal cells and in epithelial cells of the large intestine and colon (at protein level). Expressed in brown adipocytes (at protein level). Expressed in vascular endothelial cells (at protein level).

The protein resides in the cytoplasm. The enzyme catalyses (2E,6E)-farnesol + NADP(+) = (2E,6E)-farnesal + NADPH + H(+). The dehydrogenase activity is inhibited by 3',3'',5',5''-tetraiodophenolphthalein, phenolphthalein, genistein, quercetin, zearalenone and diethylstilbestrol. Functionally, catalyzes the NADPH-dependent reduction of a variety of substrates including aromatic and aliphatic aldehydes, quinones, ketones, dicarbonyl compounds and 17-ketosteroids. Catalyzes the NADP(+)-dependent oxidation of aromatic, alicyclic and aliphatic alcohols, and 17beta-hydroxysteroids. To a lesser extent, can also catalyze the reduction of some aldoses and ketoses and the oxidation of some sugar alcohols. In the stomach, lung and colon tissues, mediates the reduction of farnesal and geranylgeranial into farnesol and geranylgeraniol respectively. By reducing 4-hydroxy-2-nonenal (HNE), produced during lipid peroxidation, into 1,4-dihydro-2-nonene (DHN), protects vascular endothelial cells from damage elicited by oxidized lipoproteins. This Rattus norvegicus (Rat) protein is Aldo-keto reductase family 1 member C15.